Reading from the N-terminus, the 120-residue chain is Small ribosomal subunit protein bS16 (120 aa).

Residues 84–110 (KREVKSNPEKAKPGKRAQERAAEKAQK) show a composition bias toward basic and acidic residues. The disordered stretch occupies residues 84–120 (KREVKSNPEKAKPGKRAQERAAEKAQKAADAAAATAE). Over residues 111-120 (AADAAAATAE) the composition is skewed to low complexity.

It belongs to the bacterial ribosomal protein bS16 family.

The protein is Small ribosomal subunit protein bS16 of Rhizobium rhizogenes (strain K84 / ATCC BAA-868) (Agrobacterium radiobacter).